The primary structure comprises 251 residues: Flagellar brake protein YcgR (251 aa).

Positions 127 to 239 constitute a PilZ domain; that stretch reads QRRDGFRVRP…ASRTLQRYID (113 aa).

This sequence belongs to the YcgR family. As to quaternary structure, monomer. Interacts with the flagellar basal bodies.

The protein localises to the bacterial flagellum basal body. Acts as a flagellar brake, regulating swimming and swarming in a bis-(3'-5') cyclic diguanylic acid (c-di-GMP)-dependent manner. Binds 1 c-di-GMP dimer per subunit. Increasing levels of c-di-GMP lead to decreased motility. The chain is Flagellar brake protein YcgR from Leptothrix cholodnii (strain ATCC 51168 / LMG 8142 / SP-6) (Leptothrix discophora (strain SP-6)).